We begin with the raw amino-acid sequence, 92 residues long: C-C motif chemokine 3 (92 aa).

The signal sequence occupies residues 1–23 (MKVSTAALAVLLCTMALWNEVFS). Intrachain disulfides connect C34–C57 and C35–C73.

The protein belongs to the intercrine beta (chemokine CC) family. In terms of assembly, self-associates. Also heterodimer of MIP-1-alpha(4-69) and MIP-1-beta(3-69). Interacts with CCR1.

The protein resides in the secreted. Its function is as follows. Monokine with inflammatory and chemokinetic properties. Binds to CCR1, CCR4 and CCR5. One of the major HIV-suppressive factors produced by CD8+ T-cells. Recombinant MIP-1-alpha induces a dose-dependent inhibition of different strains of HIV-1, HIV-2, and simian immunodeficiency virus (SIV). The polypeptide is C-C motif chemokine 3 (Ccl3) (Rattus norvegicus (Rat)).